Here is a 681-residue protein sequence, read N- to C-terminus: Potassium-transporting ATPase ATP-binding subunit (681 aa).

4 helical membrane passes run 30–50, 59–79, 216–236, and 255–275; these read LLVYVGAILATSLYFLGFFGI, LAIALILWFTVLFANFAEAIA, ILLVTLSIIFLAVSATLLPFT, and IALLVCLAPTTIGALLSSIGI. Aspartate 306 (4-aspartylphosphate intermediate) is an active-site residue. ATP-binding positions include aspartate 343, glutamate 347, 376–383, and lysine 394; that span reads FTATTRMS. 2 residues coordinate Mg(2+): aspartate 517 and aspartate 521. The next 3 helical transmembrane spans lie at 587-607, 615-635, and 661-681; these read FAIIPVLFYGIFPQLEALNLM, AILSAIIYNAVIIIVLIPLSL, and LIAPFIAIKLIDMLLTVLGIV.

The protein belongs to the cation transport ATPase (P-type) (TC 3.A.3) family. Type IA subfamily. The system is composed of three essential subunits: KdpA, KdpB and KdpC.

It localises to the cell membrane. The enzyme catalyses K(+)(out) + ATP + H2O = K(+)(in) + ADP + phosphate + H(+). In terms of biological role, part of the high-affinity ATP-driven potassium transport (or Kdp) system, which catalyzes the hydrolysis of ATP coupled with the electrogenic transport of potassium into the cytoplasm. This subunit is responsible for energy coupling to the transport system and for the release of the potassium ions to the cytoplasm. The protein is Potassium-transporting ATPase ATP-binding subunit of Listeria monocytogenes serovar 1/2a (strain ATCC BAA-679 / EGD-e).